The sequence spans 238 residues: Uridylate kinase (238 aa).

An ATP-binding site is contributed by 12–15 (KLSG). Gly-54 contacts UMP. Positions 55 and 59 each coordinate ATP. Residues Asp-74 and 135–142 (TGNPFFTT) each bind UMP. Thr-162, Tyr-168, and Asp-171 together coordinate ATP.

The protein belongs to the UMP kinase family. Homohexamer.

Its subcellular location is the cytoplasm. It catalyses the reaction UMP + ATP = UDP + ADP. Its pathway is pyrimidine metabolism; CTP biosynthesis via de novo pathway; UDP from UMP (UMPK route): step 1/1. Inhibited by UTP. Catalyzes the reversible phosphorylation of UMP to UDP. The chain is Uridylate kinase from Bordetella parapertussis (strain 12822 / ATCC BAA-587 / NCTC 13253).